The sequence spans 281 residues: General control transcription factor GCN4 (281 aa).

A Phosphoserine modification is found at serine 17. Required for transcriptional activation stretches follow at residues leucine 89–serine 100 and proline 106–aspartate 125. Phosphothreonine; by PHO85 is present on threonine 165. Positions valine 167–leucine 200 match the Nuclear localization signal motif. The disordered stretch occupies residues leucine 217–glutamine 248. Serine 218 is subject to Phosphoserine. In terms of domain architecture, bZIP spans serine 225–arginine 281. Residues lysine 231 to arginine 249 carry the Nuclear localization signal motif. Residues lysine 231–lysine 251 are basic motif. Positions leucine 253 to leucine 274 are leucine-zipper.

It belongs to the bZIP family. GCN4 subfamily. As to quaternary structure, homodimer. Each subunit binds overlapping and non-identical half-sites that flank the central CG base-pair in the pseudo-palindromic motif 5'-ATGA[CG]TCAT-3'. Interacts with the mediator tail; the interaction with GAL11/MED15 is direct. Interacts with the SAGA histone acetyltransferase complex. Interacts with the SWI/SNF chromatin remodeling complex. In terms of processing, phosphorylated by the cyclin-CDK PCL5-PHO85. Phosphorylation of Thr-165 induces degradation of GCN4 by the E3 ubiquitin ligase complex SCF(Cdc4).

It is found in the nucleus. Master transcriptional regulator that mediates the response to amino acid starvation. Binds variations of the DNA sequence 5'-ATGA[CG]TCAT-3' in canonical nucleosome-depleted 5'-positioned promoters, and also within coding sequences and 3' non-coding regions. During nutrient starvation (low or poor amino acid, carbon or purine sources), it activates genes required for amino acid biosynthesis and transport, autophagy, cofactor biosynthesis and transport, mitochondrial transport, and additional downstream transcription factors. Activates transcription by recruiting multiple coactivators, including the mediator complex, the SAGA complex, and the SWI/SNF complex, to enable assembly of the pre-initiation complex at core promoters. The protein is General control transcription factor GCN4 of Saccharomyces cerevisiae (strain ATCC 204508 / S288c) (Baker's yeast).